Here is a 210-residue protein sequence, read N- to C-terminus: Probable GTP-binding protein EngB (210 aa).

Residues 30 to 204 form the EngB-type G domain; it reads QGYEVAFAGR…YRVLADWMEL (175 aa). Residues 38–45, 64–68, 82–85, 149–152, and 182–185 each bind GTP; these read GRSNAGKS, GRTQL, DLPG, TKAD, and LFSA. Residues S45 and T66 each contribute to the Mg(2+) site.

The protein belongs to the TRAFAC class TrmE-Era-EngA-EngB-Septin-like GTPase superfamily. EngB GTPase family. The cofactor is Mg(2+).

Necessary for normal cell division and for the maintenance of normal septation. This is Probable GTP-binding protein EngB from Pseudomonas putida (strain ATCC 700007 / DSM 6899 / JCM 31910 / BCRC 17059 / LMG 24140 / F1).